The chain runs to 293 residues: Elongation factor Ts (293 aa).

The involved in Mg(2+) ion dislocation from EF-Tu stretch occupies residues threonine 80–valine 83.

The protein belongs to the EF-Ts family.

The protein localises to the cytoplasm. Associates with the EF-Tu.GDP complex and induces the exchange of GDP to GTP. It remains bound to the aminoacyl-tRNA.EF-Tu.GTP complex up to the GTP hydrolysis stage on the ribosome. In Staphylococcus aureus (strain Newman), this protein is Elongation factor Ts.